Here is a 288-residue protein sequence, read N- to C-terminus: Homoserine kinase (288 aa).

Residue 79 to 89 (PPARGLGSSSA) coordinates ATP.

Belongs to the GHMP kinase family. Homoserine kinase subfamily.

Its subcellular location is the cytoplasm. The enzyme catalyses L-homoserine + ATP = O-phospho-L-homoserine + ADP + H(+). It participates in amino-acid biosynthesis; L-threonine biosynthesis; L-threonine from L-aspartate: step 4/5. Its function is as follows. Catalyzes the ATP-dependent phosphorylation of L-homoserine to L-homoserine phosphate. This chain is Homoserine kinase, found in Listeria monocytogenes serovar 1/2a (strain ATCC BAA-679 / EGD-e).